The chain runs to 200 residues: GTP cyclohydrolase 1 (200 aa).

3 residues coordinate Zn(2+): C87, H90, and C158.

The protein belongs to the GTP cyclohydrolase I family. As to quaternary structure, toroid-shaped homodecamer, composed of two pentamers of five dimers.

It catalyses the reaction GTP + H2O = 7,8-dihydroneopterin 3'-triphosphate + formate + H(+). The protein operates within cofactor biosynthesis; 7,8-dihydroneopterin triphosphate biosynthesis; 7,8-dihydroneopterin triphosphate from GTP: step 1/1. In Xanthomonas euvesicatoria pv. vesicatoria (strain 85-10) (Xanthomonas campestris pv. vesicatoria), this protein is GTP cyclohydrolase 1.